The primary structure comprises 3011 residues: MADPGMMSLFGEDGNIFSEGLEGLGECGYPENTVNPMGQQMPMDQGFPSLQSSLHHPPANQNQAKLTHFDHYNQYEQQKMHLMDQPNRMISNAPGNGIASPHSQYHNPPVPQVPHGSGASGQMGVYPSMQNERHGQPFVDSGSMWGPRAVQVPDQIRAPYQQQQQQPQPTQPPQAPSGPPGQGHPQHMQQMGNYMARGDFSMQQHGQPQQQRMNQFSQGQEGLNQGNPFIATSGPGHLSHVPQQNPSMAPSLRHSVQQFHHHPPTALHGESVAHSPRFSPNPPQQGAVRPQTLNFSSRSQTVPSPTINNSGQYSRYPYSNLNQGLVNNTGMNQNLGLTNNTPMNQSVPRYPNAVGFPSNSGQGLMHQQPIHPSGSLNQMNTQTMHPSQPQGTYASPPPMSPMKAMSNPAGTPPPQVRPGSAGIPMEVGSYPNIPHPQPSHQPPGAMGIGQRNMGPRNMQQNRPFMGMSSTPREMGGHMRPNGCPGVGLADPQAIQERLISGQQLPSQQQSFQQQMPTCPPMQPHPGIHHQSSPPPHPHHQPWAQLHQSPQNTPQKVPVLQHSPSEPFLEKPVPDMTQVSGPNTQLVKSDDYLPSVEPQPQQKKKKKKNNHIAAEGPSKSFGKEDFPGGLDSQNLSRNSVDCSQEDKKKKKKPKAKKEPKDPKEPKEKKEPKTPKVPKTPKEPKEKKAKNTTPKPKTSKKTSNKKTDSESSAAKKKVNKGKEGSENSDLDKTPPPSPHPEDEDDPGVQKRRSSRQVKRKRYTEDLEFKISDEEADDADAAGRDSPSNTSQSEQQESADAEGPVVEKIMSSRSVKKKMENGEEVEIEEFYVKYKNFSYLHCQWASVEELDKDKRIQQKIKRFKAKQGQNKFLSEIDDELFNPDYVEIDRILDFSRSTDDNGEPVTHYLVKWCSLPYEDSTWELKQDIDQAKIEEFEKLMSREPEMERVERPPADDWKKSESSREYKNNNKLREYQLEGVNWLLFNWYNTRNCILADEMGLGKTIQSITFLYEIYLKGIHGPFLVIAPLSTIPNWEREFRTWTELNVVVYHGSQASRRTIQLYEMYFKDPQGRVIKGSYKFHAIITTFEMILTDCPELRNIPWRCVVIDEAHRLKNRNCKLLEGLKMMDLEHKVLLTGTPLQNTVEELFSLLHFLEPGRFPSETTFMQEFGDLKTEEQVQKLQAILKPMMLRRLKEDVEKNLAPKEETIIEVELTNIQKKYYRAILEKNFAFLSKGGGQANVPNLLNTMMELRKCCNHPYLINGAEEKILEEFKETHNADSPDFQLQAMIQAAGKLVLIDKLLPKLKAGGHRVLIFSQMVRCLDILEDYLIQRRYPYERIDGRVRGNLRQAAIDRFSRPDSDRFVFLLCTRAGGLGINLTAADTCIIFDSDWNPQNDLQAQARCHRIGQSKSVKIYRLITRNSYEREMFDKASLKLGLDKAVLQSMSGRENATNGVQQLSKKEIEDLLRKGAYGALMDEEDEGSKFCEEDIDQILLRRTHTITIESEGKGSTFAKASFVASGNRTDISLDDPNFWQKWAKKAELDIDALNGRNNLVIDTPRVRKQTRLYSAVKEDELMEFSDLESDSEEKPSTKPRRPQDKSQGYARSECFRVEKNLLVYGWGRWTDILSHGRYKRQLTEQDVETICRTILVYCLNHYKGDENIKSFIWDLITPTADGQTRALVNHSGLSAPVPRGRKGKKVKAQSSQPMLQDADWLTTCNPDVLFQEDSYRKHLKHHCNKVLLRVRMLYYLRQEVIGDQADRILEGADSSEVDVWIPEPFHAEVPADWWDKEADKSLLIGVFKHGYEKYNSMRADSTLCFLERVGMPDAKAIAAEQRGTDMLADGGDGGEFDREDEDPEYKPTRTPFKDEIDEFANSPPEDKEESIEIHPNKHSESNSELGQLYWPNTSTLTTRLRRLITAYQRSYKRQQMRQEALMKTDRRRRRPREEVRALEAEREAIITEKRQKWTRREEADFYRVVSTFGIIFDPIKHQFDWNQFRAFARLDKKSDESLEKYFNGFVNMCRRVCRMPVKPDDEPPDLSTMIEPITEERASRTLYRIELLRKIREQVLHHPQLGERLKLCQPSLDLPEWWECGKHDKDLLIGAAKHGVSRTDYHILNDPELSFLEAHKNFAQNRGTGNANTVSSLHPVGAGCSQTPPIVPSTPVQEEKSTEQTESKVEGSENPAAKEKSDIKEETDIADKDTKQDCDAEAETGSVKCELKDIEMSTDVDPKSISEKGSEEDEEEKLDDDDKSEESSQPEAGAVSQGKNFDEESNASMSTARDETRDGFYMEDGDPSVVQLLHERTFAFSFWPKDRVMINRLDNICEAVLKGKWPVNRRQMFDFQGLIPGYTPTAVDSPLQKRSFAELSMIGQASISGSEDITASPQLSKEDALNLSVPRQRRRRRRKIEIEAERAAKRRNLMEMVAQLRESQVVSENGQEKVVDLSKASREATSSTSNFSSVTSKFILPNVSTPVSDAFKTQMELLQAGLSRTPTRHLLNGSLIDGEPPMKRRRGRRKNVEGLDLLFMSNKRTSLTVEDAEVTKAFEEDMEALPARNIPSPGQLDPDTRIPVINLEDGTRLVGEDAPKNKDLVEWLKLHPTYTVDMPSYVPKSADVLFSSFQKPKQKRHRCRNPNKLDINTLTGEERVPVVNKRNGKKMGGAMAPPMKDLPRWLEENPEFAVAPDWTDIVKQSGFVPESMFDRLLTGPVVREEGASRRGRRPKSEIAKAAAAAAAVASTSGINPLLMNSLFAGMDLTSLQNLQNLQSLQLAGLMGFPPGLATAAAAGGDAKNPAAMLPLMLPGMAGLPNMFGLSGLLNNPITATTGNATTASGQGETEDGASKAEEKKNENEEENKDSEKSTDTVSATDSANGSVSAATAATTATATTTTTTNTGLPTNPLAFNPFLLSTMAPGLFYPSMFLPPGLGGLTLPGFPALAGLQNAVGSNEEKATDKTEGTAFKDEENLEGSDAEESLDKTADSSILEDEIAQGEELDSLDGGEEIENNENDE.

5 disordered regions span residues 90–146 (ISNA…SMWG), 159–189 (PYQQQQQQPQPTQPPQAPSGPPGQGHPQHMQ), 202–422 (MQQH…GSAG), 502–806 (QQLP…VEKI), and 941–960 (PEMERVERPPADDWKKSESS). The segment covering 159–168 (PYQQQQQQPQ) has biased composition (low complexity). Residues 169-179 (PTQPPQAPSGP) are compositionally biased toward pro residues. Low complexity predominate over residues 203–215 (QQHGQPQQQRMNQ). Composition is skewed to polar residues over residues 216-227 (FSQGQEGLNQGN), 241-258 (VPQQNPSMAPSLRHSVQQ), 291-347 (QTLN…NQSV), and 374-393 (GSLNQMNTQTMHPSQPQGTY). Residues 502–516 (QQLPSQQQSFQQQMP) show a composition bias toward low complexity. Composition is skewed to polar residues over residues 576–586 (TQVSGPNTQLV) and 630–641 (DSQNLSRNSVDC). Basic and acidic residues-rich tracts occupy residues 655 to 684 (KKEPKDPKEPKEKKEPKTPKVPKTPKEPKE) and 718 to 730 (KGKEGSENSDLDK). Over residues 747–759 (QKRRSSRQVKRKR) the composition is skewed to basic residues. Positions 760–770 (YTEDLEFKISD) are enriched in basic and acidic residues. Over residues 783-795 (SPSNTSQSEQQES) the composition is skewed to polar residues. 2 Chromo domains span residues 801–868 (PVVE…GQNK) and 883–948 (VEID…RVER). In terms of domain architecture, Helicase ATP-binding spans 981–1155 (LFNWYNTRNC…FSLLHFLEPG (175 aa)). Position 994–1001 (994–1001 (DEMGLGKT)) interacts with ATP. A DEAH box motif is present at residues 1106 to 1109 (DEAH). The Helicase C-terminal domain maps to 1295–1465 (LIDKLLPKLK…LSKKEIEDLL (171 aa)). Disordered regions lie at residues 1577–1602 (FSDLESDSEEKPSTKPRRPQDKSQGY), 1836–1869 (GTDMLADGGDGGEFDREDEDPEYKPTRTPFKDEI), and 2136–2291 (GTGN…GFYM). Residues 1585-1597 (EEKPSTKPRRPQD) show a composition bias toward basic and acidic residues. The span at 1845–1856 (DGGEFDREDEDP) shows a compositional bias: acidic residues. Basic and acidic residues predominate over residues 1857–1867 (EYKPTRTPFKD). The segment covering 2136-2145 (GTGNANTVSS) has biased composition (polar residues). 2 stretches are compositionally biased toward basic and acidic residues: residues 2166-2207 (QEEK…KQDC) and 2218-2238 (CELKDIEMSTDVDPKSISEKG). Acidic residues predominate over residues 2239–2253 (SEEDEEEKLDDDDKS). Residues 2403 to 2433 (RRRRRKIEIEAERAAKRRNLMEMVAQLRESQ) adopt a coiled-coil conformation. A Phosphoserine modification is found at S2561. 2 disordered regions span residues 2825 to 2900 (TTGN…LPTN) and 2946 to 3011 (GSNE…ENDE). The segment covering 2841-2851 (GASKAEEKKNE) has biased composition (basic and acidic residues). Residues 2864 to 2877 (DTVSATDSANGSVS) are compositionally biased toward polar residues. A compositionally biased stretch (low complexity) spans 2878–2893 (AATAATTATATTTTTT). A compositionally biased stretch (basic and acidic residues) spans 2948–2964 (NEEKATDKTEGTAFKDE). Composition is skewed to acidic residues over residues 2965-2974 (ENLEGSDAEE) and 2984-3011 (ILEDEIAQGEELDSLDGGEEIENNENDE).

It belongs to the SNF2/RAD54 helicase family. In terms of tissue distribution, expressed in the neural epithelium, otic placodes, optic placodes, branchial arches, and the olfactory placodes,.

The protein localises to the nucleus. It catalyses the reaction ATP + H2O = ADP + phosphate + H(+). In terms of biological role, ATP-dependent chromatin-remodeling factor, slides nucleosomes along DNA; nucleosome sliding requires ATP.Probable transcription regulator. Maybe involved in the in 45S precursor rRNA production. The protein is Chromodomain-helicase-DNA-binding protein 7 (CHD7) of Gallus gallus (Chicken).